The chain runs to 326 residues: uncharacterized protein (326 aa).

Belongs to the transferase hexapeptide repeat family.

This is an uncharacterized protein from Escherichia coli (strain K12).